The sequence spans 111 residues: Phosphoribosyl-ATP pyrophosphatase (111 aa).

Belongs to the PRA-PH family.

Its subcellular location is the cytoplasm. The enzyme catalyses 1-(5-phospho-beta-D-ribosyl)-ATP + H2O = 1-(5-phospho-beta-D-ribosyl)-5'-AMP + diphosphate + H(+). It functions in the pathway amino-acid biosynthesis; L-histidine biosynthesis; L-histidine from 5-phospho-alpha-D-ribose 1-diphosphate: step 2/9. The protein is Phosphoribosyl-ATP pyrophosphatase of Azotobacter vinelandii (strain DJ / ATCC BAA-1303).